We begin with the raw amino-acid sequence, 546 residues long: Membrane protein insertase YidC (546 aa).

Residues 6-26 (LILFIVFSFSLLLLWEAWQDK) form a helical membrane-spanning segment. The tract at residues 31–56 (PATRPVAGAPAGSAAPTPSTALNAPA) is disordered. Residues 37-56 (AGAPAGSAAPTPSTALNAPA) are compositionally biased toward low complexity. Transmembrane regions (helical) follow at residues 351-371 (LVGNWGWAIIILTILIKLALY), 425-445 (LPILIQIPVFIALYWVLLAAV), 465-482 (WYILPIIMGVTSILQVKL), and 494-514 (IMMIMPVAFTVMFVFFPAGLV).

It belongs to the OXA1/ALB3/YidC family. Type 1 subfamily. As to quaternary structure, interacts with the Sec translocase complex via SecD. Specifically interacts with transmembrane segments of nascent integral membrane proteins during membrane integration.

The protein localises to the cell inner membrane. In terms of biological role, required for the insertion and/or proper folding and/or complex formation of integral membrane proteins into the membrane. Involved in integration of membrane proteins that insert both dependently and independently of the Sec translocase complex, as well as at least some lipoproteins. Aids folding of multispanning membrane proteins. This chain is Membrane protein insertase YidC, found in Thiobacillus denitrificans (strain ATCC 25259 / T1).